The sequence spans 1023 residues: MRAAGCGGTGVAALTTKLSRSISQHQPKSMPQASVNSEQNPSVPNSPSAHKPARSQSAQSAPSRAKWFVRFFRSVFGYRKTSLTFLVALVFAATLLLSWADSSLDFSVDMPTSKHEQAVLSRSWESLQKIARTKHTYTSEGNDEVHAYLEAHIASLVAKKPYMELDTDKNGTRRVMFDVKYLSYDSVSYYESNNLVVRVNGSDSSLPALLVSAHYDSVPTSYGVTDDGMGVASMLGLLEHYSSVAQPKRTIIFNFNNNEEFGLYGAQAFLAHPWFSQIAYFLNLEGTGAGGKAILFRGTDYGIVRHFSSVRFPFASSLFQQGFNNRLIHSETDYSVYIKAGLRGLDLAFYKPRDIYHTTRDSIQNTNIKSLWHMLSSSLDFVEHVSSQTIDLDEEVHAEAGKRDLALYTSFWNHFVVFSVSQVVSANIALLVVVPVASLLLLFIIFRCNKGWGFNFVNAIKYPLSLVASVLVLTFVSQVIIVPSNPFLVNSSIGLLVATLFSLFLLLNYIVLNGLNLVFKSFKGHQHDEKLIVMCESSFLTWILLLWSTVKLSHNKFGDDHTGELFIPILFSLQAVACFLGFLGWCFKPSKKVKVSREEHQPLLSSNGSNYGTQDDDDSLAPSSSLSLQSGFSENCEVHETKSFSYDWLVQFLVIVPISSLIIFNSGSLILNGLNKSIQESLSAQNLIYKFIQIFVIVWSIPFLPFIFKLNRIIVLALSLVLLYGFFAVNITDAFNDANPLKLRFLETISMDTSPPTNLVTVSARSMDVVKDILEDMPSLKDSKTELSIDSLGDGMSLYSYETPLIPHLVPGVKNLTDYLSIDVLKDSSSVSDSPFGLLTGELKINVPRNRNCKIDFNMSNTVIKVSDTKFMESKRSPVRTVIVYNEDKYENKSSSVIGAGVPEGFSRDSKGNSVFKDMDGISQLQLNKLNWDKPYHIGFQWVPEIVESESVWSEKIRTKKLGVNIECYWGDLDQLAEKDKAGNPVVQDRVPAFEELLHYSPSYVSWANRDRGMVSVTKYIEV.

The Cytoplasmic segment spans residues 1–80; sequence MRAAGCGGTG…FFRSVFGYRK (80 aa). A compositionally biased stretch (polar residues) spans 17-48; sequence KLSRSISQHQPKSMPQASVNSEQNPSVPNSPS. The interval 17–59 is disordered; that stretch reads KLSRSISQHQPKSMPQASVNSEQNPSVPNSPSAHKPARSQSAQ. The chain crosses the membrane as a helical span at residues 81–101; it reads TSLTFLVALVFAATLLLSWAD. Topologically, residues 102–425 are vacuolar; that stretch reads SSLDFSVDMP…VVFSVSQVVS (324 aa). Asn170 and Asn200 each carry an N-linked (GlcNAc...) asparagine glycan. 2 residues coordinate Zn(2+): His214 and Asp226. Glu259 acts as the Proton acceptor in catalysis. The Zn(2+) site is built by Glu260, Glu285, and His357. A helical membrane pass occupies residues 426–446; sequence ANIALLVVVPVASLLLLFIIF. At 447–461 the chain is on the cytoplasmic side; that stretch reads RCNKGWGFNFVNAIK. The chain crosses the membrane as a helical span at residues 462–482; that stretch reads YPLSLVASVLVLTFVSQVIIV. The Vacuolar portion of the chain corresponds to 483-491; it reads PSNPFLVNS. Asn490 is a glycosylation site (N-linked (GlcNAc...) asparagine). Residues 492–512 form a helical membrane-spanning segment; it reads SIGLLVATLFSLFLLLNYIVL. Residues 513 to 529 are Cytoplasmic-facing; sequence NGLNLVFKSFKGHQHDE. A helical membrane pass occupies residues 530–550; it reads KLIVMCESSFLTWILLLWSTV. The Vacuolar segment spans residues 551-564; that stretch reads KLSHNKFGDDHTGE. A helical transmembrane segment spans residues 565 to 585; it reads LFIPILFSLQAVACFLGFLGW. At 586 to 643 the chain is on the cytoplasmic side; sequence CFKPSKKVKVSREEHQPLLSSNGSNYGTQDDDDSLAPSSSLSLQSGFSENCEVHETKS. Over residues 604 to 613 the composition is skewed to polar residues; sequence LSSNGSNYGT. The interval 604–626 is disordered; it reads LSSNGSNYGTQDDDDSLAPSSSL. A helical transmembrane segment spans residues 644 to 664; the sequence is FSYDWLVQFLVIVPISSLIIF. At 665-687 the chain is on the vacuolar side; that stretch reads NSGSLILNGLNKSIQESLSAQNL. N-linked (GlcNAc...) asparagine glycosylation occurs at Asn675. The chain crosses the membrane as a helical span at residues 688–708; sequence IYKFIQIFVIVWSIPFLPFIF. Residues 709–712 are Cytoplasmic-facing; the sequence is KLNR. The helical transmembrane segment at 713 to 733 threads the bilayer; it reads IIVLALSLVLLYGFFAVNITD. At 734 to 1023 the chain is on the vacuolar side; the sequence is AFNDANPLKL…MVSVTKYIEV (290 aa). N-linked (GlcNAc...) asparagine glycosylation is found at Asn815, Asn858, and Asn892.

Belongs to the peptidase M28 family. Zn(2+) is required as a cofactor.

Its subcellular location is the vacuole membrane. Functionally, may be involved in vacuolar sorting and osmoregulation. This chain is Vacuolar membrane protease, found in Clavispora lusitaniae (strain ATCC 42720) (Yeast).